Here is a 346-residue protein sequence, read N- to C-terminus: tRNA N6-adenosine threonylcarbamoyltransferase (346 aa).

Fe cation is bound by residues H111 and H115. Substrate-binding positions include 134-138, D167, G180, D184, and N280; that span reads LVSGG. D308 is a Fe cation binding site.

Belongs to the KAE1 / TsaD family. It depends on Fe(2+) as a cofactor.

The protein localises to the cytoplasm. The enzyme catalyses L-threonylcarbamoyladenylate + adenosine(37) in tRNA = N(6)-L-threonylcarbamoyladenosine(37) in tRNA + AMP + H(+). Functionally, required for the formation of a threonylcarbamoyl group on adenosine at position 37 (t(6)A37) in tRNAs that read codons beginning with adenine. Is involved in the transfer of the threonylcarbamoyl moiety of threonylcarbamoyl-AMP (TC-AMP) to the N6 group of A37, together with TsaE and TsaB. TsaD likely plays a direct catalytic role in this reaction. This chain is tRNA N6-adenosine threonylcarbamoyltransferase, found in Crocosphaera subtropica (strain ATCC 51142 / BH68) (Cyanothece sp. (strain ATCC 51142)).